The chain runs to 177 residues: ATP synthase subunit delta (177 aa).

The protein belongs to the ATPase delta chain family. In terms of assembly, F-type ATPases have 2 components, F(1) - the catalytic core - and F(0) - the membrane proton channel. F(1) has five subunits: alpha(3), beta(3), gamma(1), delta(1), epsilon(1). F(0) has three main subunits: a(1), b(2) and c(10-14). The alpha and beta chains form an alternating ring which encloses part of the gamma chain. F(1) is attached to F(0) by a central stalk formed by the gamma and epsilon chains, while a peripheral stalk is formed by the delta and b chains.

It is found in the cell inner membrane. Functionally, f(1)F(0) ATP synthase produces ATP from ADP in the presence of a proton or sodium gradient. F-type ATPases consist of two structural domains, F(1) containing the extramembraneous catalytic core and F(0) containing the membrane proton channel, linked together by a central stalk and a peripheral stalk. During catalysis, ATP synthesis in the catalytic domain of F(1) is coupled via a rotary mechanism of the central stalk subunits to proton translocation. In terms of biological role, this protein is part of the stalk that links CF(0) to CF(1). It either transmits conformational changes from CF(0) to CF(1) or is implicated in proton conduction. In Erwinia tasmaniensis (strain DSM 17950 / CFBP 7177 / CIP 109463 / NCPPB 4357 / Et1/99), this protein is ATP synthase subunit delta.